The primary structure comprises 320 residues: Undecaprenyl-diphosphatase (320 aa).

Transmembrane regions (helical) follow at residues F9–F29, G82–W102, L130–I150, L161–L181, L191–V211, F236–A256, L265–L285, and V296–I316.

It belongs to the UppP family.

The protein localises to the cell inner membrane. It catalyses the reaction di-trans,octa-cis-undecaprenyl diphosphate + H2O = di-trans,octa-cis-undecaprenyl phosphate + phosphate + H(+). Its function is as follows. Catalyzes the dephosphorylation of undecaprenyl diphosphate (UPP). Confers resistance to bacitracin. In Trichormus variabilis (strain ATCC 29413 / PCC 7937) (Anabaena variabilis), this protein is Undecaprenyl-diphosphatase.